A 186-amino-acid chain; its full sequence is Ribosome-recycling factor (186 aa).

Basic and acidic residues-rich tracts occupy residues 134 to 169 (RDAN…KKAE) and 176 to 186 (AKAREAEVMED). Residues 134-186 (RDANKAAETAEKDKEMTEDDRDKTKDQVQELTKKAETNVNESAKAREAEVMED) form a disordered region.

This sequence belongs to the RRF family.

Its subcellular location is the cytoplasm. Functionally, responsible for the release of ribosomes from messenger RNA at the termination of protein biosynthesis. May increase the efficiency of translation by recycling ribosomes from one round of translation to another. The sequence is that of Ribosome-recycling factor from Rhodopirellula baltica (strain DSM 10527 / NCIMB 13988 / SH1).